Reading from the N-terminus, the 132-residue chain is Ribosome-binding factor A (132 aa).

The protein belongs to the RbfA family. Monomer. Binds 30S ribosomal subunits, but not 50S ribosomal subunits or 70S ribosomes.

The protein localises to the cytoplasm. Its function is as follows. One of several proteins that assist in the late maturation steps of the functional core of the 30S ribosomal subunit. Associates with free 30S ribosomal subunits (but not with 30S subunits that are part of 70S ribosomes or polysomes). Required for efficient processing of 16S rRNA. May interact with the 5'-terminal helix region of 16S rRNA. The sequence is that of Ribosome-binding factor A from Edwardsiella ictaluri (strain 93-146).